The chain runs to 510 residues: MGGDDLSFTRLVITALFGLLMLLQIKETSASTSFVSSSVCKSDHLTYTKPYQQGSLFTINGNPVEKLRFCEALRFHKANGCIFEDSFSDDFCTIHSLLGRRFLEEKTVKDSKNSKPKTEYSHVKVSIAGSGFLLLCCALCCPCFHKERKANSHEVLPKESNSVHQVSSFEMSPSSEKIPQSPFRAPPSPSRVPQSPSRYAMSPRPSRLGPLNLTMSQINTATGNFADSHQIGEGGFGVVFKGVLDDGQVVAIKRAKKEHFENLRTEFKSEVDLLSKIGHRNLVKLLGYVDKGDERLIITEYVRNGTLRDHLDGARGTKLNFNQRLEIVIDVCHGLTYLHSYAERQIIHRDIKSSNILLTDSMRAKVADFGFARGGPTDSNQTHILTQVKGTVGYLDPEYMKTYHLTAKSDVYSFGILLVEILTGRRPVEAKRLPDERITVRWAFDKYNEGRVFELVDPNARERVDEKILRKMFSLAFQCAAPTKKERPDMEAVGKQLWAIRSSYLRRSME.

Residues 1-30 (MGGDDLSFTRLVITALFGLLMLLQIKETSA) form the signal peptide. Residues 166-178 (VSSFEMSPSSEKI) show a composition bias toward polar residues. A disordered region spans residues 166–209 (VSSFEMSPSSEKIPQSPFRAPPSPSRVPQSPSRYAMSPRPSRLG). Thr-214 carries the post-translational modification Phosphothreonine. The Protein kinase domain occupies 225 to 499 (FADSHQIGEG…MEAVGKQLWA (275 aa)). Residues 231–239 (IGEGGFGVV) and Lys-253 contribute to the ATP site. The caM-binding stretch occupies residues 240 to 265 (FKGVLDDGQVVAIKRAKKEHFENLRT). Catalysis depends on Asp-350, which acts as the Proton acceptor. Ser-354 carries the post-translational modification Phosphoserine. Thr-386 and Thr-391 each carry phosphothreonine. Tyr-399 is modified (phosphotyrosine).

Belongs to the protein kinase superfamily. Ser/Thr protein kinase family. In terms of assembly, interacts with calmodulin (CaM) in a Ca(2+)-dependent manner.

The protein resides in the cytoplasm. The catalysed reaction is L-seryl-[protein] + ATP = O-phospho-L-seryl-[protein] + ADP + H(+). The enzyme catalyses L-threonyl-[protein] + ATP = O-phospho-L-threonyl-[protein] + ADP + H(+). The chain is Calmodulin-binding receptor-like cytoplasmic kinase 3 (CRCK3) from Arabidopsis thaliana (Mouse-ear cress).